Consider the following 262-residue polypeptide: Small ribosomal subunit protein eS4B (262 aa).

The S4 RNA-binding domain maps to 42–105 (LPLIVFLRNR…GEHFRLVYDI (64 aa)). Residue Ser223 is modified to Phosphoserine.

This sequence belongs to the eukaryotic ribosomal protein eS4 family. Component of the small ribosomal subunit (SSU). Mature yeast ribosomes consist of a small (40S) and a large (60S) subunit. The 40S small subunit contains 1 molecule of ribosomal RNA (18S rRNA) and at least 33 different proteins. The large 60S subunit contains 3 rRNA molecules (25S, 5.8S and 5S rRNA) and at least 46 different proteins.

Its subcellular location is the cytoplasm. The protein localises to the nucleus. The protein resides in the nucleolus. In terms of biological role, component of the ribosome, a large ribonucleoprotein complex responsible for the synthesis of proteins in the cell. The small ribosomal subunit (SSU) binds messenger RNAs (mRNAs) and translates the encoded message by selecting cognate aminoacyl-transfer RNA (tRNA) molecules. The large subunit (LSU) contains the ribosomal catalytic site termed the peptidyl transferase center (PTC), which catalyzes the formation of peptide bonds, thereby polymerizing the amino acids delivered by tRNAs into a polypeptide chain. The nascent polypeptides leave the ribosome through a tunnel in the LSU and interact with protein factors that function in enzymatic processing, targeting, and the membrane insertion of nascent chains at the exit of the ribosomal tunnel. The sequence is that of Small ribosomal subunit protein eS4B (rps402) from Schizosaccharomyces pombe (strain 972 / ATCC 24843) (Fission yeast).